The chain runs to 1106 residues: Carbamoyl phosphate synthase large chain (1106 aa).

The carboxyphosphate synthetic domain stretch occupies residues M1–E401. Residues R129, R169, G175, G176, R208, V210, E215, G241, V242, H243, Q284, and E298 each contribute to the ATP site. An ATP-grasp 1 domain is found at K133–I327. Mg(2+)-binding residues include Q284, E298, and N300. Residues Q284, E298, and N300 each contribute to the Mn(2+) site. Residues I402–A577 form an oligomerization domain region. Positions I578 to G964 are carbamoyl phosphate synthetic domain. Positions D706–M896 constitute an ATP-grasp 2 domain. ATP contacts are provided by R742, Q781, L783, E787, G812, V813, H814, S815, Q855, and E867. Mg(2+) is bound by residues Q855, E867, and N869. Positions 855, 867, and 869 each coordinate Mn(2+). Residues F965–N1106 enclose the MGS-like domain. The tract at residues F965–N1106 is allosteric domain.

It belongs to the CarB family. In terms of assembly, composed of two chains; the small (or glutamine) chain promotes the hydrolysis of glutamine to ammonia, which is used by the large (or ammonia) chain to synthesize carbamoyl phosphate. Tetramer of heterodimers (alpha,beta)4. It depends on Mg(2+) as a cofactor. Requires Mn(2+) as cofactor.

The enzyme catalyses hydrogencarbonate + L-glutamine + 2 ATP + H2O = carbamoyl phosphate + L-glutamate + 2 ADP + phosphate + 2 H(+). It catalyses the reaction hydrogencarbonate + NH4(+) + 2 ATP = carbamoyl phosphate + 2 ADP + phosphate + 2 H(+). Its pathway is amino-acid biosynthesis; L-arginine biosynthesis; carbamoyl phosphate from bicarbonate: step 1/1. It participates in pyrimidine metabolism; UMP biosynthesis via de novo pathway; (S)-dihydroorotate from bicarbonate: step 1/3. In terms of biological role, large subunit of the glutamine-dependent carbamoyl phosphate synthetase (CPSase). CPSase catalyzes the formation of carbamoyl phosphate from the ammonia moiety of glutamine, carbonate, and phosphate donated by ATP, constituting the first step of 2 biosynthetic pathways, one leading to arginine and/or urea and the other to pyrimidine nucleotides. The large subunit (synthetase) binds the substrates ammonia (free or transferred from glutamine from the small subunit), hydrogencarbonate and ATP and carries out an ATP-coupled ligase reaction, activating hydrogencarbonate by forming carboxy phosphate which reacts with ammonia to form carbamoyl phosphate. The chain is Carbamoyl phosphate synthase large chain from Natranaerobius thermophilus (strain ATCC BAA-1301 / DSM 18059 / JW/NM-WN-LF).